The sequence spans 234 residues: Synaptogyrin-4 (234 aa).

The MARVEL domain occupies 18–169 (FLRRPKTITR…QAYLAFQDLR (152 aa)). 4 helical membrane-spanning segments follow: residues 25–45 (ITRV…LTDG), 66–86 (CSFA…FLVL), 104–124 (LLDF…FCFL), and 145–165 (AAIA…YLAF).

It belongs to the synaptogyrin family.

It is found in the membrane. The sequence is that of Synaptogyrin-4 (SYNGR4) from Homo sapiens (Human).